The chain runs to 372 residues: Lipoyl synthase, mitochondrial (372 aa).

Positions 103, 108, 114, 134, 138, 141, and 349 each coordinate [4Fe-4S] cluster. Residues 119 to 338 form the Radical SAM core domain; sequence EHGTQTATIM…EERGNQLGFL (220 aa).

It belongs to the radical SAM superfamily. Lipoyl synthase family. [4Fe-4S] cluster serves as cofactor.

The protein resides in the mitochondrion. It catalyses the reaction [[Fe-S] cluster scaffold protein carrying a second [4Fe-4S](2+) cluster] + N(6)-octanoyl-L-lysyl-[protein] + 2 oxidized [2Fe-2S]-[ferredoxin] + 2 S-adenosyl-L-methionine + 4 H(+) = [[Fe-S] cluster scaffold protein] + N(6)-[(R)-dihydrolipoyl]-L-lysyl-[protein] + 4 Fe(3+) + 2 hydrogen sulfide + 2 5'-deoxyadenosine + 2 L-methionine + 2 reduced [2Fe-2S]-[ferredoxin]. Its pathway is protein modification; protein lipoylation via endogenous pathway; protein N(6)-(lipoyl)lysine from octanoyl-[acyl-carrier-protein]: step 2/2. Functionally, catalyzes the radical-mediated insertion of two sulfur atoms into the C-6 and C-8 positions of the octanoyl moiety bound to the lipoyl domains of lipoate-dependent enzymes, thereby converting the octanoylated domains into lipoylated derivatives. In Drosophila willistoni (Fruit fly), this protein is Lipoyl synthase, mitochondrial.